A 66-amino-acid chain; its full sequence is Large ribosomal subunit protein bL35 (66 aa).

Over residues 1–16 (MPKQKTHRASAKRFKR) the composition is skewed to basic residues. Positions 1–21 (MPKQKTHRASAKRFKRTGSGG) are disordered.

Belongs to the bacterial ribosomal protein bL35 family.

The chain is Large ribosomal subunit protein bL35 from Streptococcus agalactiae serotype Ia (strain ATCC 27591 / A909 / CDC SS700).